The chain runs to 405 residues: Arginine biosynthesis bifunctional protein ArgJ (405 aa).

Substrate-binding residues include threonine 152, lysine 178, threonine 189, glutamate 276, asparagine 400, and threonine 405. Threonine 189 acts as the Nucleophile in catalysis.

The protein belongs to the ArgJ family. In terms of assembly, heterotetramer of two alpha and two beta chains.

Its subcellular location is the cytoplasm. The enzyme catalyses N(2)-acetyl-L-ornithine + L-glutamate = N-acetyl-L-glutamate + L-ornithine. The catalysed reaction is L-glutamate + acetyl-CoA = N-acetyl-L-glutamate + CoA + H(+). Its pathway is amino-acid biosynthesis; L-arginine biosynthesis; L-ornithine and N-acetyl-L-glutamate from L-glutamate and N(2)-acetyl-L-ornithine (cyclic): step 1/1. It functions in the pathway amino-acid biosynthesis; L-arginine biosynthesis; N(2)-acetyl-L-ornithine from L-glutamate: step 1/4. Catalyzes two activities which are involved in the cyclic version of arginine biosynthesis: the synthesis of N-acetylglutamate from glutamate and acetyl-CoA as the acetyl donor, and of ornithine by transacetylation between N(2)-acetylornithine and glutamate. This is Arginine biosynthesis bifunctional protein ArgJ from Pseudomonas fluorescens (strain Pf0-1).